Consider the following 128-residue polypeptide: Fluoride-specific ion channel FluC (128 aa).

The next 4 membrane-spanning stretches (helical) occupy residues 2 to 22 (FYSIVAIFVGAGLGALLRWCL), 35 to 55 (LGTLAANLLGGYVIGVAAVVF), 67 to 87 (LFVITGFLGGLTTFSTYSVEV), and 96 to 116 (FGWALAVAALHLTGSFALTAL). The Na(+) site is built by Gly75 and Thr78.

This sequence belongs to the fluoride channel Fluc/FEX (TC 1.A.43) family.

The protein localises to the cell inner membrane. The catalysed reaction is fluoride(in) = fluoride(out). With respect to regulation, na(+) is not transported, but it plays an essential structural role and its presence is essential for fluoride channel function. Functionally, fluoride-specific ion channel. Important for reducing fluoride concentration in the cell, thus reducing its toxicity. In Burkholderia cenocepacia (strain ATCC BAA-245 / DSM 16553 / LMG 16656 / NCTC 13227 / J2315 / CF5610) (Burkholderia cepacia (strain J2315)), this protein is Fluoride-specific ion channel FluC.